Consider the following 161-residue polypeptide: uncharacterized protein (161 aa).

Belongs to the sapovirus VP3 family.

This is an uncharacterized protein from Sapporo virus (isolate GI/Human/Germany/pJG-Sap01) (Hu/Dresden/pJG-Sap01/DE).